We begin with the raw amino-acid sequence, 216 residues long: Peptide deformylase (216 aa).

Residues Cys-134 and His-178 each coordinate Fe cation. Glu-179 is an active-site residue. His-182 is a Fe cation binding site.

The protein belongs to the polypeptide deformylase family. It depends on Fe(2+) as a cofactor.

It carries out the reaction N-terminal N-formyl-L-methionyl-[peptide] + H2O = N-terminal L-methionyl-[peptide] + formate. Removes the formyl group from the N-terminal Met of newly synthesized proteins. Requires at least a dipeptide for an efficient rate of reaction. N-terminal L-methionine is a prerequisite for activity but the enzyme has broad specificity at other positions. The polypeptide is Peptide deformylase (Mycoplasma pneumoniae (strain ATCC 29342 / M129 / Subtype 1) (Mycoplasmoides pneumoniae)).